The primary structure comprises 718 residues: Probable protein S-acyltransferase 19 (718 aa).

2 helical membrane-spanning segments follow: residues 16-36 and 41-61; these read VVAITVFCLLSVAYYAFFAPF and IWEYILLGVYSPVALIVFVLY. Residues 100-125 form a disordered region; that stretch reads ETGSHLQSSPSVASRTSTLPNSSVKG. The segment covering 103–124 has biased composition (polar residues); that stretch reads SHLQSSPSVASRTSTLPNSSVK. Residues 174–224 enclose the DHHC domain; sequence LFCTLCNAEVRKFSKHCRSCDKCVDCFDHHCRWLNNCVGRKNYMTFISLMA. Catalysis depends on cysteine 204, which acts as the S-palmitoyl cysteine intermediate. 2 consecutive transmembrane segments (helical) span residues 222–242 and 277–297; these read LMAVSLLWLLIEAGVGIAVIV and AVSMLALFPLGELFFFHMLLI. 3 disordered regions span residues 454–511, 598–649, and 664–718; these read SSVS…HVHE, PATT…QQQQ, and GPLV…GTRK. Polar residues-rich tracts occupy residues 479-488 and 598-626; these read CRNSYAPSQG and PATTSEPRTRFSSQNQPIPSSHMGNTQNP. Residues 673–687 are compositionally biased toward basic and acidic residues; it reads DGLRHDGDSGREGQD.

This sequence belongs to the DHHC palmitoyltransferase family.

The protein resides in the cell membrane. The catalysed reaction is L-cysteinyl-[protein] + hexadecanoyl-CoA = S-hexadecanoyl-L-cysteinyl-[protein] + CoA. Its function is as follows. Palmitoyl acyltransferase. The polypeptide is Probable protein S-acyltransferase 19 (PAT19) (Arabidopsis thaliana (Mouse-ear cress)).